A 516-amino-acid chain; its full sequence is Ammonium transporter Amt1 (516 aa).

11 helical membrane-spanning segments follow: residues 17–37 (YVWI…FALL), 59–79 (ALGV…VGGL), 101–121 (IDWL…SGAV), 130–150 (YVVF…GLTW), 170–190 (LDFA…LVGA), 214–234 (MLLA…FNVG), 258–278 (VALV…VVST), 286–306 (PLWM…AVPH), 307–327 (VTWW…LPAY), 342–362 (VFAV…VFAV), and 374–394 (VAGV…VFAA). The disordered stretch occupies residues 426-516 (IGESGPDRGV…SAAVDGGENQ (91 aa)). Positions 445–491 (NDVRTDGGNDVRTDGGNDVRTDGGNDVRTDGGNDVRTDGGNDVRTDG) are enriched in basic and acidic residues.

It belongs to the ammonia transporter channel (TC 1.A.11.2) family. Homotrimer. Interacts with both GlnK1 and GlnK2 after ammonium shock. Interaction is rapid, reversible and dependent on nitrogen source.

The protein localises to the cell membrane. In terms of biological role, involved in the uptake of ammonium/ammonia (NH(4)(+)/NH(3)). Transport is electrogenic. This Haloferax mediterranei (strain ATCC 33500 / DSM 1411 / JCM 8866 / NBRC 14739 / NCIMB 2177 / R-4) (Halobacterium mediterranei) protein is Ammonium transporter Amt1.